Here is a 209-residue protein sequence, read N- to C-terminus: Ribosomal RNA small subunit methyltransferase G (209 aa).

Residues glycine 72, leucine 77, 123 to 124 (AE), and arginine 138 contribute to the S-adenosyl-L-methionine site.

The protein belongs to the methyltransferase superfamily. RNA methyltransferase RsmG family.

The protein resides in the cytoplasm. Functionally, specifically methylates the N7 position of guanine in position 518 of 16S rRNA. This chain is Ribosomal RNA small subunit methyltransferase G, found in Leifsonia xyli subsp. xyli (strain CTCB07).